The chain runs to 237 residues: Glutathione-independent glyoxalase HSP31 (237 aa).

Active-site residues include Cys138, His139, and Glu170. The residue at position 138 (Cys138) is a Cysteine sulfinic acid (-SO2H).

It belongs to the peptidase C56 family. HSP31-like subfamily. Homodimer. Post-translationally, cys-138 is easily oxidized to sulfinic acid.

It is found in the cytoplasm. Its subcellular location is the P-body. It catalyses the reaction methylglyoxal + H2O = (R)-lactate + H(+). In terms of biological role, catalyzes the conversion of methylglyoxal (MG) to D-lactate in a single glutathione (GSH)-independent step. May play a role in detoxifying endogenously produced glyoxals. Involved in protection against reactive oxygen species (ROS). Important for viability in stationary phase. May negatively regulate TORC1 in response to nutrient limitation. The protein is Glutathione-independent glyoxalase HSP31 of Saccharomyces cerevisiae (strain ATCC 204508 / S288c) (Baker's yeast).